Reading from the N-terminus, the 117-residue chain is Protein MGF 110-13L (117 aa).

Residues 1 to 16 (MKLFVLLSILVWLAQP) form the signal peptide.

The protein belongs to the asfivirus MGF 110 family.

This Ornithodoros (relapsing fever ticks) protein is Protein MGF 110-13L.